The following is a 241-amino-acid chain: Eukaryotic translation initiation factor 6 (241 aa).

This sequence belongs to the eIF-6 family. In terms of assembly, monomer. Associates with the 60S ribosomal subunit.

It is found in the cytoplasm. It localises to the nucleus. The protein localises to the nucleolus. In terms of biological role, binds to the 60S ribosomal subunit and prevents its association with the 40S ribosomal subunit to form the 80S initiation complex in the cytoplasm. Is also involved in ribosome biogenesis. Associates with pre-60S subunits in the nucleus and is involved in its nuclear export. The polypeptide is Eukaryotic translation initiation factor 6 (Encephalitozoon cuniculi (strain GB-M1) (Microsporidian parasite)).